A 534-amino-acid chain; its full sequence is NAD(P)H-quinone oxidoreductase chain 4 1 (534 aa).

Helical transmembrane passes span Ile6–Ile26, Ile34–Trp54, Leu87–Trp107, Pro113–Val133, Leu136–Ile156, Phe169–Phe189, Ala209–Phe229, Ser243–Ile263, Phe277–Phe297, Ile311–Gly331, Ala332–Val352, Phe376–Val396, Ile418–Leu438, and Ile464–Ala484.

Belongs to the complex I subunit 4 family.

The protein localises to the cellular thylakoid membrane. The catalysed reaction is a plastoquinone + NADH + (n+1) H(+)(in) = a plastoquinol + NAD(+) + n H(+)(out). It catalyses the reaction a plastoquinone + NADPH + (n+1) H(+)(in) = a plastoquinol + NADP(+) + n H(+)(out). NDH-1 shuttles electrons from NAD(P)H, via FMN and iron-sulfur (Fe-S) centers, to quinones in the respiratory chain. The immediate electron acceptor for the enzyme in this species is believed to be plastoquinone. Couples the redox reaction to proton translocation (for every two electrons transferred, four hydrogen ions are translocated across the cytoplasmic membrane), and thus conserves the redox energy in a proton gradient. The polypeptide is NAD(P)H-quinone oxidoreductase chain 4 1 (Picosynechococcus sp. (strain ATCC 27264 / PCC 7002 / PR-6) (Agmenellum quadruplicatum)).